Consider the following 420-residue polypeptide: Putative sporulation-specific glycosylase YdhD (420 aa).

LysM domains are found at residues 2–45 (FIHI…ALLI) and 48–92 (YVYT…KITI). One can recognise a GH18 domain in the interval 100–420 (AGTLSFYVLR…LRKFFTIRKV (321 aa)). The active-site Proton donor is Glu-212.

It belongs to the glycosyl hydrolase 18 family. Chitinase class II subfamily.

The protein resides in the spore wall. The chain is Putative sporulation-specific glycosylase YdhD (ydhD) from Bacillus subtilis (strain 168).